The primary structure comprises 153 residues: Superoxide dismutase [Cu-Zn] (153 aa).

Positions 45, 47, and 62 each coordinate Cu cation. A disulfide bond links Cys56 and Cys145. Positions 62, 70, 79, and 82 each coordinate Zn(2+). His119 lines the Cu cation pocket.

The protein belongs to the Cu-Zn superoxide dismutase family. Homodimer. Requires Cu cation as cofactor. The cofactor is Zn(2+).

The protein localises to the cytoplasm. It carries out the reaction 2 superoxide + 2 H(+) = H2O2 + O2. Destroys radicals which are normally produced within the cells and which are toxic to biological systems. This chain is Superoxide dismutase [Cu-Zn] (Sod), found in Chymomyza amoena.